Here is a 675-residue protein sequence, read N- to C-terminus: Collagen alpha-3(IX) chain (675 aa).

A signal peptide spans 1–21 (MTVFPTLGLLFLCQLLATTSA). 2 disordered regions span residues 22-517 (QRVG…KEAS) and 542-660 (KPLS…ICDT). The interval 25–515 (GPQGPPGPRG…TGKPGPPGKE (491 aa)) is triple-helical region 3 (COL3). Composition is skewed to pro residues over residues 27-38 (QGPPGPRGPPGP) and 51-60 (SGLPGPPGPK). Positions 62–87 (APGKPGAAGEAGLPGLPGVDGLTGTD) are enriched in low complexity. Pro residues predominate over residues 105–125 (AGPPGPAGKGLPGPPGPPGPS). Residues 126-135 (GLPGGNGFRG) are compositionally biased toward gly residues. Pro residues-rich tracts occupy residues 136 to 155 (PPGP…PGPP) and 173 to 184 (LCPPGPPGPPGM). Residues 218 to 233 (PGSVGLQGPRGLRGLP) are compositionally biased toward low complexity. Positions 242-244 (RGD) match the Cell attachment site motif. Residues 301–317 (KDGRDGAPGLDGEKGDA) show a composition bias toward basic and acidic residues. Residues 361-374 (EPGIPGDVGIPGDR) show a composition bias toward low complexity. Asparagine 479 is a glycosylation site (N-linked (GlcNAc...) asparagine). Residues 481 to 508 (TAGAPGIPGHPGPMGHQGEQGVPGITGK) show a composition bias toward low complexity. Residues 516-546 (ASEQHIRELCGEMINDQIAQLAANLRKPLSP) form a nonhelical region 3 (NC3) region. A triple-helical region 2 (COL2) region spans residues 547 to 626 (GMTGRPGPAG…QGLPGVPGIS (80 aa)). Over residues 569 to 582 (HPGARGPPGYRGPT) the composition is skewed to low complexity. Positions 591 to 593 (RGD) match the Cell attachment site motif. The span at 613-624 (DQGPQGLPGVPG) shows a compositional bias: low complexity. Residues 627 to 631 (KNGRD) are nonhelical region 2 (NC2). A triple-helical region 1 (COL1) region spans residues 632-658 (GAQGEPGLPGDPGTPGAVGAQGTPGIC). A nonhelical region 1 (NC1) region spans residues 659–675 (DTSACMGAVGASTSKKS).

This sequence belongs to the fibril-associated collagens with interrupted helices (FACIT) family. In terms of assembly, trimers composed of three different chains: alpha 1(IX), alpha 2(IX), and alpha 3(IX). Prolines at the third position of the tripeptide repeating unit (G-X-Y) are hydroxylated in some or all of the chains.

Its subcellular location is the secreted. The protein resides in the extracellular space. It is found in the extracellular matrix. Functionally, collagen type IX is a minor cartilage non-fibrillar collagen. It is associated with type II collagen fibrils. In Gallus gallus (Chicken), this protein is Collagen alpha-3(IX) chain (COL9A3).